The sequence spans 324 residues: Lignin-forming anionic peroxidase (324 aa).

The N-terminal stretch at 1-22 (MSFLRFVGAILFLVAIFGASNA) is a signal peptide. Residue Gln23 is modified to Pyrrolidone carboxylic acid. Intrachain disulfides connect Cys33–Cys111, Cys66–Cys71, Cys117–Cys320, and Cys196–Cys228. Asn35 is a glycosylation site (N-linked (GlcNAc...) asparagine). The Proton acceptor role is filled by His64. 5 residues coordinate Ca(2+): Asp65, Val68, Gly70, Asp72, and Ser74. N-linked (GlcNAc...) asparagine glycosylation is present at Asn150. Pro159 provides a ligand contact to substrate. His189 contacts heme b. Thr190 is a Ca(2+) binding site. N-linked (GlcNAc...) asparagine glycosylation occurs at Asn207. Positions 242, 245, and 250 each coordinate Ca(2+).

Belongs to the peroxidase family. Classical plant (class III) peroxidase subfamily. It depends on Ca(2+) as a cofactor. Heme b is required as a cofactor.

The protein localises to the secreted. It catalyses the reaction 2 a phenolic donor + H2O2 = 2 a phenolic radical donor + 2 H2O. Removal of H(2)O(2), oxidation of toxic reductants, biosynthesis and degradation of lignin, suberization, auxin catabolism, response to environmental stresses such as wounding, pathogen attack and oxidative stress. These functions might be dependent on each isozyme/isoform in each plant tissue. Functionally, plays an integral role in secondary cell wall biosynthesis by the polymerization of cinnamyl alcohols into lignin and by forming rigid cross-links between cellulose, pectin, hydroxy-proline-rich glycoproteins, and lignin. The polypeptide is Lignin-forming anionic peroxidase (Nicotiana tabacum (Common tobacco)).